Consider the following 86-residue polypeptide: Small ribosomal subunit protein uS17 (86 aa).

The protein belongs to the universal ribosomal protein uS17 family. Part of the 30S ribosomal subunit.

One of the primary rRNA binding proteins, it binds specifically to the 5'-end of 16S ribosomal RNA. This chain is Small ribosomal subunit protein uS17, found in Bifidobacterium adolescentis (strain ATCC 15703 / DSM 20083 / NCTC 11814 / E194a).